The chain runs to 1374 residues: DNA-directed RNA polymerase subunit beta (1374 aa).

This sequence belongs to the RNA polymerase beta chain family. The RNAP catalytic core consists of 2 alpha, 1 beta, 1 beta' and 1 omega subunit. When a sigma factor is associated with the core the holoenzyme is formed, which can initiate transcription.

The catalysed reaction is RNA(n) + a ribonucleoside 5'-triphosphate = RNA(n+1) + diphosphate. Functionally, DNA-dependent RNA polymerase catalyzes the transcription of DNA into RNA using the four ribonucleoside triphosphates as substrates. This is DNA-directed RNA polymerase subunit beta from Acidovorax sp. (strain JS42).